The sequence spans 822 residues: Molybdenum cofactor sulfurase (822 aa).

The residue at position 245 (Lys245) is an N6-(pyridoxal phosphate)lysine. Cys412 is a catalytic residue. The MOSC domain maps to 658–814 (LRLIRQSSND…LKTYSPIKAI (157 aa)).

Belongs to the class-V pyridoxal-phosphate-dependent aminotransferase family. MOCOS subfamily. It depends on pyridoxal 5'-phosphate as a cofactor.

It catalyses the reaction Mo-molybdopterin + L-cysteine + AH2 = thio-Mo-molybdopterin + L-alanine + A + H2O. It participates in cofactor biosynthesis; molybdopterin biosynthesis. In terms of biological role, sulfurates the molybdenum cofactor. Sulfation of molybdenum is essential for xanthine dehydrogenase (XDH) and aldehyde oxidase (ADO) enzymes in which molybdenum cofactor is liganded by 1 oxygen and 1 sulfur atom in active form. The polypeptide is Molybdenum cofactor sulfurase (Bombyx mori (Silk moth)).